The following is a 1186-amino-acid chain: Partner and localizer of BRCA2 (1186 aa).

Positions 1 to 160 are required for its oligomerization and is important for its focal concentration at DNA damage sites; that stretch reads MDEPPGKPLS…QKRTFISQER (160 aa). The interval 1–200 is interaction with RAD51; the sequence is MDEPPGKPLS…PVTEIRTHLL (200 aa). Residues 1-319 form an interaction with BRCA1 region; that stretch reads MDEPPGKPLS…SKSGQLPTSS (319 aa). Residues 1–579 form a DNA-binding (with the preference D loop &gt; dsDNA &gt; ssDNA) region; sequence MDEPPGKPLS…EDSLSWSNSA (579 aa). Residues 9–41 are a coiled coil; that stretch reads LSCEEKEKLKEKLAFLKREYSKTLARLQRAQRA. 2 disordered regions span residues 52 to 72 and 95 to 157; these read VEEQ…HSEP and KTSI…TFIS. Residues 120–141 are compositionally biased toward basic and acidic residues; sequence RTDDTQEHFPHRVSDPSGEQKQ. Positions 143–152 are enriched in basic residues; sequence LPSRRKKQQK. Phosphoserine is present on residues S172 and S190. Residues 252–273 are disordered; that stretch reads TLSDSGSSQHLEHIPPKGSSEL. S285 is subject to Phosphoserine. The interval 346-365 is disordered; the sequence is KEQNQTEKSLKSPSDTLDGR. S376 and S387 each carry phosphoserine. A chAM (Chromatin-association motif); required for chromatin association, mediates nucleosome association region spans residues 395–446; the sequence is SCTVPEGLLFPAEYYVRTTRSMSNCQRKVAVEAVIQSHLDVKKKGFKNKNKD. Residues 440–525 form a disordered region; the sequence is FKNKNKDASK…RKSACTPASD (86 aa). S454 is modified (phosphoserine). Polar residues predominate over residues 467–488; sequence GTCTGQPSSRTSQKLLSLTKVS. S660 is modified (phosphoserine). 2 disordered regions span residues 679 to 698 and 774 to 798; these read PGKS…KTGL and KQFD…QGQP. A compositionally biased stretch (polar residues) spans 687 to 698; that stretch reads PNSQSQHTKTGL. The required for interaction with POLH and POLH DNA synthesis stimulation stretch occupies residues 775–1186; it reads QFDSSGSPAK…DGNIFVYHYS (412 aa). S781 is modified (phosphoserine). The tract at residues 853-1186 is interaction with RAD51, BRCA2 and POLH; it reads GNLQLVSELK…DGNIFVYHYS (334 aa). 7 WD repeats span residues 854–915, 917–961, 962–1009, 1010–1052, 1058–1109, 1115–1153, and 1155–1186; these read NLQL…WHFA, VPVL…QVLL, KSGN…LMPP, EETI…MHID, SVCH…MLYC, AGRF…LLPP, and SDQH…YHYS.

In terms of assembly, homooligomer; dissociated upon DNA damage thus allowing association with BRCA1. Oligomerization is essential for its focal accumulation at DNA breaks. Part of a BRCA complex containing BRCA1, BRCA2 and PALB2. Interacts with BRCA1 and this interaction is essential for its function in HRR. Interacts with RAD51AP1 and MORF4L1/MRG15. Component of the homologous recombination repair (HR) complex composed of ERCC5/XPG, BRCA2, PALB2, DSS1 and RAD51. Within the complex, interacts with ERCC5/XPG and BRCA2. Interacts with BRCA2, RAD51C, RAD51 and XRCC3; the interactions are direct and it may serve as a scaffold for a HR complex containing PALB2, BRCA2, RAD51C, RAD51 and XRCC3. Interacts with POLH; the interaction is direct.

The protein resides in the nucleus. Its function is as follows. Plays a critical role in homologous recombination repair (HRR) through its ability to recruit BRCA2 and RAD51 to DNA breaks. Strongly stimulates the DNA strand-invasion activity of RAD51, stabilizes the nucleoprotein filament against a disruptive BRC3-BRC4 polypeptide and helps RAD51 to overcome the suppressive effect of replication protein A (RPA). Functionally cooperates with RAD51AP1 in promoting of D-loop formation by RAD51. Serves as the molecular scaffold in the formation of the BRCA1-PALB2-BRCA2 complex which is essential for homologous recombination. Via its WD repeats is proposed to scaffold a HR complex containing RAD51C and BRCA2 which is thought to play a role in HR-mediated DNA repair. Essential partner of BRCA2 that promotes the localization and stability of BRCA2. Also enables its recombinational repair and checkpoint functions of BRCA2. May act by promoting stable association of BRCA2 with nuclear structures, allowing BRCA2 to escape the effects of proteasome-mediated degradation. Binds DNA with high affinity for D loop, which comprises single-stranded, double-stranded and branched DNA structures. May play a role in the extension step after strand invasion at replication-dependent DNA double-strand breaks; together with BRCA2 is involved in both POLH localization at collapsed replication forks and DNA polymerization activity. The polypeptide is Partner and localizer of BRCA2 (PALB2) (Homo sapiens (Human)).